The primary structure comprises 179 residues: Protein LDB18 (179 aa).

Its function is as follows. May be involved in protein-linked oligosaccharide phosphorylation since the deletion reduces the negative charge of the cell surface. The polypeptide is Protein LDB18 (LDB18) (Saccharomyces cerevisiae (strain ATCC 204508 / S288c) (Baker's yeast)).